Here is a 260-residue protein sequence, read N- to C-terminus: Snake venom serine protease pallabin-2 (260 aa).

A signal peptide spans 1 to 18 (MVLIKVLANLLILQLSYA). The propeptide occupies 19–24 (QKSSEL). The 227-residue stretch at 25 to 251 (IIGGDECNIN…HLDWIENIIA (227 aa)) folds into the Peptidase S1 domain. Cystine bridges form between C31/C163, C50/C66, C98/C258, C142/C212, C174/C191, and C202/C227. Catalysis depends on H65, which acts as the Charge relay system. Residue N103 is glycosylated (N-linked (GlcNAc...) asparagine). The active-site Charge relay system is the D110. The active-site Charge relay system is the S206.

The protein belongs to the peptidase S1 family. Snake venom subfamily. As to quaternary structure, monomer. In terms of tissue distribution, expressed by the venom gland.

Its subcellular location is the secreted. Snake venom serine protease that may act in the hemostasis system of the prey. This is Snake venom serine protease pallabin-2 (JZTHR7) from Gloydius halys (Chinese water mocassin).